A 305-amino-acid chain; its full sequence is Putative monooxygenase p33MONOX (305 aa).

Residues leucine 37 to lysine 56 form a disordered region. Residue threonine 44 is modified to Phosphothreonine. The Flavin-containing monooxygenase motif signature appears at leucine 67 to leucine 77. Disordered stretches follow at residues glutamine 158–serine 236 and glutamine 259–phenylalanine 305. Residues proline 169–serine 183 show a composition bias toward low complexity. Phosphothreonine is present on threonine 175. A phosphoserine mark is found at serine 182 and serine 183. The span at threonine 193–serine 210 shows a compositional bias: polar residues.

It belongs to the P33MONOX family. As to quaternary structure, interacts with NELFB, NOL12 and PRNP. As to expression, down-regulated in the occipital lobe of an early stage Alzheimer disease patients.

It is found in the cytoplasm. Potential NADPH-dependent oxidoreductase. May be involved in the regulation of neuronal survival, differentiation and axonal outgrowth. This chain is Putative monooxygenase p33MONOX (KIAA1191), found in Homo sapiens (Human).